A 178-amino-acid polypeptide reads, in one-letter code: Protein GrpE (178 aa).

The protein belongs to the GrpE family. As to quaternary structure, homodimer.

It localises to the cytoplasm. Participates actively in the response to hyperosmotic and heat shock by preventing the aggregation of stress-denatured proteins, in association with DnaK and GrpE. It is the nucleotide exchange factor for DnaK and may function as a thermosensor. Unfolded proteins bind initially to DnaJ; upon interaction with the DnaJ-bound protein, DnaK hydrolyzes its bound ATP, resulting in the formation of a stable complex. GrpE releases ADP from DnaK; ATP binding to DnaK triggers the release of the substrate protein, thus completing the reaction cycle. Several rounds of ATP-dependent interactions between DnaJ, DnaK and GrpE are required for fully efficient folding. The chain is Protein GrpE from Rickettsia africae (strain ESF-5).